A 133-amino-acid polypeptide reads, in one-letter code: Protransforming growth factor alpha (133 aa).

Positions 1–23 (MVPSAGQLALFALGIFLAVCQAL) are cleaved as a signal peptide. A propeptide spans 24–38 (ENSTSALSDPPVAAA) (removed in mature form). At 24-97 (ENSTSALSDP…AVVAASQKKQ (74 aa)) the chain is on the extracellular side. An N-linked (GlcNAc...) asparagine glycan is attached at N25. The 41-residue stretch at 42–82 (HFNDCPDSHTQFCFHGTCRFLLQEEKPACVCHSGYVGARCE) folds into the EGF-like domain. 3 disulfide bridges follow: C46/C59, C54/C70, and C72/C81. Positions 89–133 (VVAASQKKQAITALVVVTIVALAVLIITCVLIHCCEVRKHSVVVP) are cleaved as a propeptide — removed in mature form. A helical membrane pass occupies residues 98-120 (AITALVVVTIVALAVLIITCVLI). The Cytoplasmic portion of the chain corresponds to 121 to 133 (HCCEVRKHSVVVP).

As to quaternary structure, interacts with the PDZ domains of MAGI3, SDCBP and SNTA1. The interaction with SDCBP, is required for the targeting to the cell surface. In the endoplasmic reticulum, in its immature form (i.e. with a prosegment and lacking full N-glycosylation), interacts with CNIH. In the Golgi apparatus, may form a complex with CNIH and GORASP2. Interacts (via cytoplasmic C-terminal domain) with NKD2. Skin.

The protein resides in the secreted. Its subcellular location is the extracellular space. It localises to the cell membrane. In terms of biological role, TGF alpha is a mitogenic polypeptide that is able to bind to the EGF receptor/EGFR and to act synergistically with TGF beta to promote anchorage-independent cell proliferation in soft agar. The chain is Protransforming growth factor alpha (TGFA) from Ovis aries (Sheep).